The following is a 147-amino-acid chain: 3-dehydroquinate dehydratase (147 aa).

Y24 acts as the Proton acceptor in catalysis. The substrate site is built by N73, H79, and D86. The active-site Proton donor is the H99. Substrate is bound by residues 100–101 (LS) and R110.

Belongs to the type-II 3-dehydroquinase family. In terms of assembly, homododecamer.

It catalyses the reaction 3-dehydroquinate = 3-dehydroshikimate + H2O. The protein operates within metabolic intermediate biosynthesis; chorismate biosynthesis; chorismate from D-erythrose 4-phosphate and phosphoenolpyruvate: step 3/7. In terms of biological role, catalyzes a trans-dehydration via an enolate intermediate. The polypeptide is 3-dehydroquinate dehydratase (Hyphomonas neptunium (strain ATCC 15444)).